Consider the following 673-residue polypeptide: MPSYTVTVATGSQWFAGTDDYIYLSLIGSAGCSEKHLLDKAFYNDFERGAVDSYDVTVDEELGEIQLVRIEKRKYWLHDDWYLKYITLKTPTDYIEFPCYRWITGEGEIVLRDGRAKLARDDQIHILKQHRRKELEARQKQYRWMEWNPGFPLSIDAKCHKDLPRDIQFDSEKGVDFVLNYSKAMENLFINRFMHMFQSSWNDFADFEKIFVKISNTISERVKNHWQEDLMFGYQFLNGCNPVLIKRCRELPQKLPVTTEMVECSLERHLSLEQEVQEGNIFIVDYELLDGIDANKTDPCTHQFLAAPICLLYKNLANKIVPIAIQLNQAPGEKNPIFLPSDAKYDWLLAKIWVRSSDFHVHQTITHLLCTHLVSEVFGIAMYRQLPAVHPIFKLLVAHVRFTIAINTKAREQLICEYGLFDKANATGGGGHVQMVQRAVQDLTYSSLCFPEAIKARGMDSTEDIPYYFYRDDGLLVWEAIQSFTSEVVSIYYEDDQVVMEDQELQDFVKDVYVYGMRGRKASGFPKSIKSREKLSEYLTVVIFTASAQHAAVNFGQYDWCSWIPNAPPTMRAPPATAKGVVTIEQIVATLPDRGRSCWHLGAVWALSQFQENELFLGMYPEEHFIEKPVKEAMTRFRKNLEAIVNVIAERNKNKKLPYYYLSPDRIPNSVAI.

Positions 2–117 (PSYTVTVATG…EIVLRDGRAK (116 aa)) constitute a PLAT domain. Residues glycine 17, threonine 18, aspartate 19, asparagine 44, aspartate 45, glutamate 47, aspartate 79, and aspartate 80 each coordinate Ca(2+). The Lipoxygenase domain maps to 118-673 (LARDDQIHIL…PDRIPNSVAI (556 aa)). A Phosphoserine modification is found at serine 271. The Fe cation site is built by histidine 367 and histidine 372. A Phosphoserine modification is found at serine 523. Fe cation-binding residues include histidine 550, asparagine 554, and isoleucine 673.

This sequence belongs to the lipoxygenase family. As to quaternary structure, homodimer. Interacts with ALOX5AP and LTC4S. Interacts with COTL1, the interaction is required for stability and efficient catalytic activity. Interacts with PIK3R1; this interaction bridges ALOX5 with CD40 after CD40 ligation in B cells and leads to the production of reactive oxygen species (ROS). Interacts (via PLAT domain) with DICER1 (via Dicer dsRNA-binding fold domain); this interaction enhances arachidonate 5-lipoxygenase activity and modifies the miRNA precursor processing activity of DICER1. Requires Fe cation as cofactor. Serine phosphorylation by MAPKAPK2 is stimulated by arachidonic acid. Phosphorylation on Ser-523 by PKA has an inhibitory effect. Phosphorylation on Ser-271 prevents export from the nucleus. Phosphorylation at Ser-523 is stimulated by 8-bromo-3',5'-cyclic AMP or prostaglandin E2.

Its subcellular location is the cytoplasm. The protein resides in the nucleus matrix. It localises to the nucleus membrane. The protein localises to the perinuclear region. It is found in the cytosol. Its subcellular location is the nucleus envelope. The protein resides in the nucleus intermembrane space. The enzyme catalyses (5Z,8Z,11Z,14Z)-eicosatetraenoate + O2 = leukotriene A4 + H2O. The catalysed reaction is 18-HEPE + O2 = (5S)-hydroperoxy-18-hydroxy-(7E,9E,11Z,14Z,16E)-eicosapentaenoate. It catalyses the reaction (18R)-hydroxy-(5Z,8Z,11Z,14Z,16E)-eicosapentaenoate + O2 = (5S)-hydroperoxy-(18R)-hydroxy-(6E,8Z,11Z,14Z,16E)-eicosapentaenoate. It carries out the reaction (18S)-hydroxy-(5Z,8Z,11Z,14Z,16E)-eicosapentaenoate + O2 = (5S)-hydroperoxy-(18S)-hydroxy-(6E,8Z,11Z,14Z,16E)-eicosapentaenoate. The enzyme catalyses (5S)-hydroperoxy-(18S)-hydroxy-(6E,8Z,11Z,14Z,16E)-eicosapentaenoate = (5S,6S)-epoxy-(18S)-hydroxy-(7E,9E,11Z,14Z,16E)-eicosapentaenoate + H2O. The catalysed reaction is (5S)-hydroperoxy-(18R)-hydroxy-(6E,8Z,11Z,14Z,16E)-eicosapentaenoate = (5S,6S)-epoxy-(18R)-hydroxy-(7E,9E,11Z,14Z,16E)-eicosapentaenoate + H2O. It catalyses the reaction (5S)-hydroperoxy-18-hydroxy-(7E,9E,11Z,14Z,16E)-eicosapentaenoate = (5S,6S)-epoxy-18-hydroxy-(7E,9E,11Z,14Z,16E)-eicosapentaenoate + H2O. It carries out the reaction (5Z,8Z,11Z,14Z)-eicosatetraenoate + O2 = (5S)-hydroperoxy-(6E,8Z,11Z,14Z)-eicosatetraenoate. The enzyme catalyses (15S)-hydroxy-(5Z,8Z,11Z,13E)-eicosatetraenoate + O2 = (5S)-hydroperoxy-(15S)-hydroxy-(6E,8Z,11Z,13E)-eicosatetraenoate. The catalysed reaction is (5S)-hydroperoxy-(6E,8Z,11Z,14Z)-eicosatetraenoate = leukotriene A4 + H2O. It catalyses the reaction (5Z,8Z,11Z,14Z)-eicosatetraenoate + O2 = (8S)-hydroperoxy-(5Z,9E,11Z,14Z)-eicosatetraenoate. It carries out the reaction (5Z,8Z,11Z,14Z)-eicosatetraenoate + O2 = (12S)-hydroperoxy-(5Z,8Z,10E,14Z)-eicosatetraenoate. The enzyme catalyses (5Z,8Z)-eicosadienoate + O2 = (5S)-hydroperoxy-(6E,8Z)-eicosadienoate. The catalysed reaction is (12S)-hydroxy-(5Z,8Z,10E,14Z)-eicosatetraenoate + O2 = (5S)-hydroperoxy-(12S)-hydroxy-(6E,8Z,10E,14Z)-eicosatetraenoate. It catalyses the reaction (5Z,8Z,11Z,14Z,17Z)-eicosapentaenoate + O2 = 5-hydroperoxy-(6E,8Z,11Z,14Z,17Z)-eicosapentaenoate. It carries out the reaction (4Z,7Z,10Z,13Z,16Z,19Z)-docosahexaenoate + O2 = (14S)-hydroperoxy-(4Z,7Z,10Z,12E,16Z,19Z)-docosahexaenoate. The enzyme catalyses (4Z,7Z,10Z,13Z,16Z,19Z)-docosahexaenoate + O2 = (7S)-hydroperoxy-(4Z,8E,10Z,13Z,16Z,19Z)-docosahexaenoate. The catalysed reaction is (4Z,7Z,10Z,13Z,16Z,19Z)-docosahexaenoate + O2 = (17S)-hydroperoxy-(4Z,7Z,10Z,13Z,15E,19Z)-docosahexaenoate. It functions in the pathway lipid metabolism; leukotriene A4 biosynthesis. In terms of biological role, catalyzes the oxygenation of arachidonate to 5-hydroperoxyeicosatetraenoate (5-HPETE) followed by the dehydration to 5,6- epoxyeicosatetraenoate (Leukotriene A4/LTA4), the first two steps in the biosynthesis of leukotrienes, which are potent mediators of inflammation. Also catalyzes the oxygenation of arachidonate into 8-hydroperoxyicosatetraenoate (8-HPETE) and 12-hydroperoxyicosatetraenoate (12-HPETE). Displays lipoxin synthase activity being able to convert (15S)-HETE into a conjugate tetraene. Although arachidonate is the preferred substrate, this enzyme can also metabolize oxidized fatty acids derived from arachidonate such as (15S)-HETE, eicosapentaenoate (EPA) such as (18R)- and (18S)-HEPE or docosahexaenoate (DHA) which lead to the formation of specialized pro-resolving mediators (SPM) lipoxin and resolvins E and D respectively, therefore it participates in anti-inflammatory responses. Oxidation of DHA directly inhibits endothelial cell proliferation and sprouting angiogenesis via peroxisome proliferator-activated receptor gamma (PPARgamma). It does not catalyze the oxygenation of linoleic acid and does not convert (5S)-HETE to lipoxin isomers. In addition to inflammatory processes, it participates in dendritic cell migration, wound healing through an antioxidant mechanism based on heme oxygenase-1 (HO-1) regulation expression, monocyte adhesion to the endothelium via ITGAM expression on monocytes. Moreover, it helps establish an adaptive humoral immunity by regulating primary resting B cells and follicular helper T cells and participates in the CD40-induced production of reactive oxygen species (ROS) after CD40 ligation in B cells through interaction with PIK3R1 that bridges ALOX5 with CD40. May also play a role in glucose homeostasis, regulation of insulin secretion and palmitic acid-induced insulin resistance via AMPK. Can regulate bone mineralization and fat cell differentiation increases in induced pluripotent stem cells. The protein is Polyunsaturated fatty acid 5-lipoxygenase of Mesocricetus auratus (Golden hamster).